The chain runs to 455 residues: tRNA modification GTPase MnmE (455 aa).

(6S)-5-formyl-5,6,7,8-tetrahydrofolate-binding residues include Arg-23, Glu-85, and Arg-124. Positions Gly-220–Ile-375 constitute a TrmE-type G domain. A K(+)-binding site is contributed by Asn-230. GTP contacts are provided by residues Asn-230–Ser-235, Thr-249–Thr-255, and Asp-274–Gly-277. Residue Ser-234 coordinates Mg(2+). The K(+) site is built by Thr-249, Val-251, and Thr-254. Thr-255 contacts Mg(2+). Residue Lys-455 coordinates (6S)-5-formyl-5,6,7,8-tetrahydrofolate.

This sequence belongs to the TRAFAC class TrmE-Era-EngA-EngB-Septin-like GTPase superfamily. TrmE GTPase family. Homodimer. Heterotetramer of two MnmE and two MnmG subunits. It depends on K(+) as a cofactor.

Its subcellular location is the cytoplasm. Functionally, exhibits a very high intrinsic GTPase hydrolysis rate. Involved in the addition of a carboxymethylaminomethyl (cmnm) group at the wobble position (U34) of certain tRNAs, forming tRNA-cmnm(5)s(2)U34. This is tRNA modification GTPase MnmE from Geotalea uraniireducens (strain Rf4) (Geobacter uraniireducens).